A 279-amino-acid polypeptide reads, in one-letter code: Phosphatidylglycerol--prolipoprotein diacylglyceryl transferase (279 aa).

7 helical membrane passes run 14–34 (IAFS…ACAI), 62–82 (YFLW…ILIY), 106–126 (FVGI…IASY), 136–156 (LLIY…FGRI), 190–210 (PSQL…VMWA), 218–238 (GLLI…AEFY), and 252–272 (LSMG…ILLY). An a 1,2-diacyl-sn-glycero-3-phospho-(1'-sn-glycerol)-binding site is contributed by R155.

The protein belongs to the Lgt family.

Its subcellular location is the cell inner membrane. It catalyses the reaction L-cysteinyl-[prolipoprotein] + a 1,2-diacyl-sn-glycero-3-phospho-(1'-sn-glycerol) = an S-1,2-diacyl-sn-glyceryl-L-cysteinyl-[prolipoprotein] + sn-glycerol 1-phosphate + H(+). It functions in the pathway protein modification; lipoprotein biosynthesis (diacylglyceryl transfer). In terms of biological role, catalyzes the transfer of the diacylglyceryl group from phosphatidylglycerol to the sulfhydryl group of the N-terminal cysteine of a prolipoprotein, the first step in the formation of mature lipoproteins. This chain is Phosphatidylglycerol--prolipoprotein diacylglyceryl transferase, found in Helicobacter pylori (strain HPAG1).